A 154-amino-acid chain; its full sequence is Ribosome maturation factor RimP (154 aa).

This sequence belongs to the RimP family.

It localises to the cytoplasm. In terms of biological role, required for maturation of 30S ribosomal subunits. The protein is Ribosome maturation factor RimP of Yersinia pseudotuberculosis serotype O:1b (strain IP 31758).